The chain runs to 284 residues: L-fucose dehydrogenase (284 aa).

Residues arginine 19, isoleucine 21, aspartate 40, lysine 41, aspartate 62, valine 63, asparagine 89, tyrosine 154, lysine 158, isoleucine 187, threonine 189, and leucine 191 each coordinate NAD(+).

It belongs to the short-chain dehydrogenases/reductases (SDR) family.

The enzyme catalyses L-fucose + NAD(+) = L-fucono-1,5-lactone + NADH + H(+). It carries out the reaction D-arabinose + NAD(+) = D-arabinono-1,5-lactone + NADH + H(+). It catalyses the reaction L-galactose + NAD(+) = L-galactono-1,5-lactone + NADH + H(+). It functions in the pathway carbohydrate degradation; L-fucose degradation. Catalyzes the NAD(+)-dependent oxidation of L-fucose, yielding L-fucono-1,5-lactone, which rapidly converts spontaneously to L-fucone-1,4-lactone. Can also act on D-arabinose and L-galactose, with lower catalytic efficiency. Does not use NADPH. May be the initial enzyme of the putative L-fucose degradation pathway in mammals. The sequence is that of L-fucose dehydrogenase (HSD17B14) from Oryctolagus cuniculus (Rabbit).